Consider the following 669-residue polypeptide: Elongation factor G 2 (669 aa).

A tr-type G domain is found at 1 to 276; sequence MGIRNIGIMA…SIVDYLPSPF (276 aa). Residues 10-17, 74-78, and 128-131 each bind GTP; these read AHIDAGKT, DTPGH, and NKMD.

Belongs to the TRAFAC class translation factor GTPase superfamily. Classic translation factor GTPase family. EF-G/EF-2 subfamily.

Its subcellular location is the cytoplasm. Catalyzes the GTP-dependent ribosomal translocation step during translation elongation. During this step, the ribosome changes from the pre-translocational (PRE) to the post-translocational (POST) state as the newly formed A-site-bound peptidyl-tRNA and P-site-bound deacylated tRNA move to the P and E sites, respectively. Catalyzes the coordinated movement of the two tRNA molecules, the mRNA and conformational changes in the ribosome. This chain is Elongation factor G 2 (fusA2), found in Borreliella afzelii (strain PKo) (Borrelia afzelii).